The following is a 374-amino-acid chain: Type IV pilus assembly protein PilC (374 aa).

A run of 3 helical transmembrane segments spans residues 138-158, 187-207, and 347-367; these read AMTYPIAVIIVALIVSAILLI, EFLQEWWLAVIVGVGAIGFTF, and IMAVLGVLVGGLIVAMYLPIF.

The protein belongs to the GSP F family. In terms of assembly, homotetramer. Interacts with PilB.

Its subcellular location is the cell inner membrane. Functionally, essential inner membrane component of the type IV pilus (T4P) that plays a role in surface and host cell adhesion, colonization, biofilm maturation, virulence, and twitching, a form of surface-associated motility facilitated by cycles of extension, adhesion, and retraction of T4P fibers. Controls both pilus assembly and disassembly and plays an important role in PilB localization to the complex and ATPase activity. This chain is Type IV pilus assembly protein PilC (pilC), found in Pseudomonas aeruginosa (strain ATCC 15692 / DSM 22644 / CIP 104116 / JCM 14847 / LMG 12228 / 1C / PRS 101 / PAO1).